Consider the following 155-residue polypeptide: Ribosome-binding factor A (155 aa).

It belongs to the RbfA family. As to quaternary structure, monomer. Binds 30S ribosomal subunits, but not 50S ribosomal subunits or 70S ribosomes.

Its subcellular location is the cytoplasm. Functionally, one of several proteins that assist in the late maturation steps of the functional core of the 30S ribosomal subunit. Associates with free 30S ribosomal subunits (but not with 30S subunits that are part of 70S ribosomes or polysomes). Required for efficient processing of 16S rRNA. May interact with the 5'-terminal helix region of 16S rRNA. The sequence is that of Ribosome-binding factor A from Methylocella silvestris (strain DSM 15510 / CIP 108128 / LMG 27833 / NCIMB 13906 / BL2).